We begin with the raw amino-acid sequence, 541 residues long: Kinesin light chain 1 (541 aa).

A coiled-coil region spans residues 27 to 156 (KTKQVIQGLE…HLEFMNQLKK (130 aa)). A compositionally biased stretch (basic and acidic residues) spans 156 to 176 (KYDDDISPSEDKDSDSSKEPL). A disordered region spans residues 156–201 (KYDDDISPSEDKDSDSSKEPLDDLFPNDEDEPGQGIQHSDSSAAAA). Serine 162 bears the Phosphoserine mark. TPR repeat units lie at residues 211–244 (LRTLHNLVIQYASQGRYEVAVPSCKQALEDLEKT), 253–286 (ATMLNILALVYRDQNKYKDAANLLNDALAIREKT), 295–328 (AATLNNLAVLYGKRGKYKEAEPLCKRALEIREKV), 337–370 (AKQLNNLALLCQNQGKYEEVEYYYQRALGIYQTK), and 380–413 (AKTKNNLASCYLKQGKFKQAETLYKEILTRAHEA). Phosphotyrosine is present on tyrosine 448. Serine 459 carries the post-translational modification Phosphoserine. Residues 463-496 (TTTLKNLGALYRRQGKFEAAETLEEAAMRSRKQG) form a TPR 6 repeat. Residues 493 to 541 (RKQGLDNVHKQRVAEVLNDPESMEKRRSRESLNMDVVKYESGPDGGEEA) form a disordered region. 2 stretches are compositionally biased toward basic and acidic residues: residues 495–505 (QGLDNVHKQRV) and 514–524 (SMEKRRSRESL). 2 positions are modified to phosphoserine; by AMPK: serine 520 and serine 523.

The protein belongs to the kinesin light chain family. As to quaternary structure, oligomeric complex composed of two heavy chains and two light chains. Interacts with SPAG9. Interacts with ATCAY; may link mitochondria to KLC1 and regulate mitochondria localization into neuron projections. Interacts (via TPR repeats) with TOR1A; the interaction associates TOR1A with the kinesin oligomeric complex. Interacts with BORCS5. Interacts with MAPK8IP3/JIP3 and NTRK2/TRKB; interaction with NTRK2/TRKB is mediated by MAPK8IP3/JIP3. Interacts with CLSTN1; phosphorylation at Ser-459 inhibits interaction with CLSTN1. Phosphorylation at Ser-459 by ERK inhibits interaction with CLSTN1 and localization to cytoplasmic vesicles.

Its subcellular location is the cell projection. The protein localises to the growth cone. The protein resides in the cytoplasmic vesicle. It is found in the cytoplasm. It localises to the cytoskeleton. In terms of biological role, kinesin is a microtubule-associated force-producing protein that may play a role in organelle transport. The light chain may function in coupling of cargo to the heavy chain or in the modulation of its ATPase activity. The protein is Kinesin light chain 1 (Klc1) of Mus musculus (Mouse).